The sequence spans 274 residues: Formamidopyrimidine-DNA glycosylase (274 aa).

P2 (schiff-base intermediate with DNA) is an active-site residue. E3 acts as the Proton donor in catalysis. The active-site Proton donor; for beta-elimination activity is K57. 3 residues coordinate DNA: H92, R111, and K152. The FPG-type zinc finger occupies Q237–P271. Catalysis depends on R261, which acts as the Proton donor; for delta-elimination activity.

This sequence belongs to the FPG family. As to quaternary structure, monomer. Requires Zn(2+) as cofactor.

It carries out the reaction Hydrolysis of DNA containing ring-opened 7-methylguanine residues, releasing 2,6-diamino-4-hydroxy-5-(N-methyl)formamidopyrimidine.. The enzyme catalyses 2'-deoxyribonucleotide-(2'-deoxyribose 5'-phosphate)-2'-deoxyribonucleotide-DNA = a 3'-end 2'-deoxyribonucleotide-(2,3-dehydro-2,3-deoxyribose 5'-phosphate)-DNA + a 5'-end 5'-phospho-2'-deoxyribonucleoside-DNA + H(+). Its function is as follows. Involved in base excision repair of DNA damaged by oxidation or by mutagenic agents. Acts as a DNA glycosylase that recognizes and removes damaged bases. Has a preference for oxidized purines, such as 7,8-dihydro-8-oxoguanine (8-oxoG). Has AP (apurinic/apyrimidinic) lyase activity and introduces nicks in the DNA strand. Cleaves the DNA backbone by beta-delta elimination to generate a single-strand break at the site of the removed base with both 3'- and 5'-phosphates. The protein is Formamidopyrimidine-DNA glycosylase of Haemophilus ducreyi (strain 35000HP / ATCC 700724).